Reading from the N-terminus, the 131-residue chain is Small ribosomal subunit protein uS8 (131 aa).

The protein belongs to the universal ribosomal protein uS8 family. In terms of assembly, part of the 30S ribosomal subunit. Contacts proteins S5 and S12.

Its function is as follows. One of the primary rRNA binding proteins, it binds directly to 16S rRNA central domain where it helps coordinate assembly of the platform of the 30S subunit. The protein is Small ribosomal subunit protein uS8 of Nautilia profundicola (strain ATCC BAA-1463 / DSM 18972 / AmH).